Reading from the N-terminus, the 233-residue chain is Cytidylate kinase (233 aa).

Residue Gly15 to Thr23 participates in ATP binding. A compositionally biased stretch (basic and acidic residues) spans Arg183–Asp201. The interval Arg183–Ala202 is disordered.

Belongs to the cytidylate kinase family. Type 1 subfamily.

The protein resides in the cytoplasm. It carries out the reaction CMP + ATP = CDP + ADP. The catalysed reaction is dCMP + ATP = dCDP + ADP. This is Cytidylate kinase from Geobacter sulfurreducens (strain ATCC 51573 / DSM 12127 / PCA).